A 192-amino-acid polypeptide reads, in one-letter code: Ribose 1,5-bisphosphate phosphokinase PhnN (192 aa).

Position 15 to 22 (15 to 22) interacts with ATP; it reads GPSGAGKD.

The protein belongs to the ribose 1,5-bisphosphokinase family.

The enzyme catalyses alpha-D-ribose 1,5-bisphosphate + ATP = 5-phospho-alpha-D-ribose 1-diphosphate + ADP. The protein operates within metabolic intermediate biosynthesis; 5-phospho-alpha-D-ribose 1-diphosphate biosynthesis; 5-phospho-alpha-D-ribose 1-diphosphate from D-ribose 5-phosphate (route II): step 3/3. Catalyzes the phosphorylation of ribose 1,5-bisphosphate to 5-phospho-D-ribosyl alpha-1-diphosphate (PRPP). In Brucella melitensis biotype 2 (strain ATCC 23457), this protein is Ribose 1,5-bisphosphate phosphokinase PhnN.